Consider the following 347-residue polypeptide: D-fructose 1,6-bisphosphatase class 2/sedoheptulose 1,7-bisphosphatase (347 aa).

Residues D33, E57, D97, and E100 each contribute to the Mn(2+) site. Residues E100–T102, Y131, R176–R178, and D198–D200 contribute to the substrate site. E225 is a binding site for Mn(2+).

The protein belongs to the FBPase class 2 family. Homotetramer. The cofactor is Mn(2+).

It carries out the reaction beta-D-fructose 1,6-bisphosphate + H2O = beta-D-fructose 6-phosphate + phosphate. The catalysed reaction is D-sedoheptulose 1,7-bisphosphate + H2O = D-sedoheptulose 7-phosphate + phosphate. It participates in carbohydrate biosynthesis; Calvin cycle. Its function is as follows. Catalyzes the hydrolysis of fructose 1,6-bisphosphate (Fru 1,6-P2) and sedoheptulose 1,7-bisphosphate (Sed 1,7-P2) to fructose 6-phosphate and sedoheptulose 7-phosphate, respectively. The sequence is that of D-fructose 1,6-bisphosphatase class 2/sedoheptulose 1,7-bisphosphatase from Thermosynechococcus vestitus (strain NIES-2133 / IAM M-273 / BP-1).